We begin with the raw amino-acid sequence, 309 residues long: Probable manganese-dependent inorganic pyrophosphatase (309 aa).

Mn(2+)-binding residues include His9, Asp13, Asp15, Asp75, His97, and Asp149.

Belongs to the PPase class C family. Requires Mn(2+) as cofactor.

The protein localises to the cytoplasm. It carries out the reaction diphosphate + H2O = 2 phosphate + H(+). The chain is Probable manganese-dependent inorganic pyrophosphatase from Bacillus velezensis (strain DSM 23117 / BGSC 10A6 / LMG 26770 / FZB42) (Bacillus amyloliquefaciens subsp. plantarum).